A 299-amino-acid chain; its full sequence is tRNA dimethylallyltransferase (299 aa).

13 to 20 contacts ATP; the sequence is GPTASGKT. Substrate is bound at residue 15-20; that stretch reads TASGKT. The segment at 38–41 is interaction with substrate tRNA; it reads DSRQ.

Belongs to the IPP transferase family. Monomer. Mg(2+) is required as a cofactor.

The catalysed reaction is adenosine(37) in tRNA + dimethylallyl diphosphate = N(6)-dimethylallyladenosine(37) in tRNA + diphosphate. Its function is as follows. Catalyzes the transfer of a dimethylallyl group onto the adenine at position 37 in tRNAs that read codons beginning with uridine, leading to the formation of N6-(dimethylallyl)adenosine (i(6)A). This is tRNA dimethylallyltransferase from Prochlorococcus marinus (strain MIT 9211).